The chain runs to 620 residues: Glutathione-regulated potassium-efflux system protein KefC (620 aa).

The Periplasmic segment spans residues 1–3 (MDS). The chain crosses the membrane as a helical span at residues 4-24 (HTLVQALIYLGSAALIVPIAV). Arg-25 is a topological domain (cytoplasmic). Residues 26 to 46 (LGLGSVLGYLIAGCIIGPWGL) form a helical membrane-spanning segment. At 47–53 (RLVTDAE) the chain is on the periplasmic side. The helical transmembrane segment at 54–74 (SILHFAEIGVVLMLFIIGLEL) threads the bilayer. The Cytoplasmic portion of the chain corresponds to 75–89 (DPQRLWKLRAAVFGG). A helical transmembrane segment spans residues 90–110 (GALQMVICGGLLGLFCMLLGL). The Periplasmic segment spans residues 111 to 113 (RWQ). A helical membrane pass occupies residues 114–134 (VAELIGMTLALSSTAIAMQAM). Over 135 to 148 (NERNLMVTQMGRSA) the chain is Cytoplasmic. A helical membrane pass occupies residues 149–169 (FAVLLFQDIAAIPLVAMIPLL). Residues 170 to 177 (AASSASTT) lie on the Periplasmic side of the membrane. The helical transmembrane segment at 178–198 (MGAFALSALKVAGALVLVVLL) threads the bilayer. Residues 199–213 (GRYVTRPALRFVARS) are Cytoplasmic-facing. The chain crosses the membrane as a helical span at residues 214 to 233 (GLREVFSAVALFLVFGFGLL). The Periplasmic portion of the chain corresponds to 234–236 (LEE). Residues 237–254 (VGLSMAMGAFLAGVLLAS) form a helical membrane-spanning segment. Over 255–269 (SEYRHALESDIEPFK) the chain is Cytoplasmic. A helical transmembrane segment spans residues 270-290 (GLLLGLFFIGVGMSIDFGTLI). Residues 291–293 (ENP) lie on the Periplasmic side of the membrane. The helical transmembrane segment at 294-314 (LRIVILLLGFLIIKIAMLWLI) threads the bilayer. At 315-326 (ARPLQVPNKQRR) the chain is on the cytoplasmic side. Residues 327 to 347 (WFAVLLGQGSEFAFVVFGAAQ) traverse the membrane as a helical segment. Topologically, residues 348–358 (MANVLEPEWAK) are periplasmic. Residues 359–379 (SLTLAVALSMAATPILLVILN) form a helical membrane-spanning segment. Residues 380-620 (RLEQSSTEEA…ADEPETKPSS (241 aa)) lie on the Cytoplasmic side of the membrane. Residues 399–518 (QPRVIIAGFG…AGVEKPERET (120 aa)) form the RCK N-terminal domain. Residues 597–620 (GWQGTEEGKHTGNMADEPETKPSS) form a disordered region.

This sequence belongs to the monovalent cation:proton antiporter 2 (CPA2) transporter (TC 2.A.37) family. KefC subfamily. In terms of assembly, homodimer. Interacts with the regulatory subunit KefF.

It localises to the cell inner membrane. In terms of biological role, pore-forming subunit of a potassium efflux system that confers protection against electrophiles. Catalyzes K(+)/H(+) antiport. The chain is Glutathione-regulated potassium-efflux system protein KefC from Escherichia coli O157:H7.